A 538-amino-acid chain; its full sequence is Bifunctional purine biosynthesis protein PurH (538 aa).

Residues 8-158 (IPAPDKVKIR…KNHAYVTVVT (151 aa)) form the MGS-like domain.

Belongs to the PurH family.

It carries out the reaction (6R)-10-formyltetrahydrofolate + 5-amino-1-(5-phospho-beta-D-ribosyl)imidazole-4-carboxamide = 5-formamido-1-(5-phospho-D-ribosyl)imidazole-4-carboxamide + (6S)-5,6,7,8-tetrahydrofolate. The enzyme catalyses IMP + H2O = 5-formamido-1-(5-phospho-D-ribosyl)imidazole-4-carboxamide. The protein operates within purine metabolism; IMP biosynthesis via de novo pathway; 5-formamido-1-(5-phospho-D-ribosyl)imidazole-4-carboxamide from 5-amino-1-(5-phospho-D-ribosyl)imidazole-4-carboxamide (10-formyl THF route): step 1/1. Its pathway is purine metabolism; IMP biosynthesis via de novo pathway; IMP from 5-formamido-1-(5-phospho-D-ribosyl)imidazole-4-carboxamide: step 1/1. This chain is Bifunctional purine biosynthesis protein PurH, found in Agrobacterium fabrum (strain C58 / ATCC 33970) (Agrobacterium tumefaciens (strain C58)).